Consider the following 148-residue polypeptide: uncharacterized protein (148 aa).

An N-terminal signal peptide occupies residues 1-35 (MRCVTRTRNWWRRAARMPRAGSSAWWVAVCKQVCT).

The protein localises to the secreted. This is an uncharacterized protein from Homo sapiens (Human).